Reading from the N-terminus, the 459-residue chain is Glycosyl hydrolase family 109 protein (459 aa).

The segment at residues 1–31 is a signal peptide (tat-type signal); it reads MHNIHRRNFLKAAGAATAGLVTANIALNAYA. Residues 64-65, aspartate 86, 135-138, 155-156, and asparagine 184 contribute to the NAD(+) site; these read ER, WEWH, and EV. Residues tyrosine 213, arginine 232, 244-247, and tyrosine 326 each bind substrate; that span reads YPTH. Tyrosine 244 is an NAD(+) binding site.

This sequence belongs to the Gfo/Idh/MocA family. Glycosyl hydrolase 109 subfamily. Requires NAD(+) as cofactor. In terms of processing, predicted to be exported by the Tat system. The position of the signal peptide cleavage has not been experimentally proven.

Glycosidase. This Shewanella baltica (strain OS195) protein is Glycosyl hydrolase family 109 protein.